The following is a 152-amino-acid chain: MAHAERTFIAIKPDGVQRGLVGEIIKRFEQKGFRLVAMKFLQASEELLKQHYIDLKDRPFFPGLVKYMNSGPVVAMVWEGLNVVKTGRVMLGETNPADSKPGTIRGDFCIQVGRNIIHGSDSVKSAEKEINLWFKPEELIEYKPCAFDWIYE.

The interval 1-66 (MAHAERTFIA…DRPFFPGLVK (66 aa)) is interaction with AKAP13. 6 residues coordinate ATP: lysine 12, phenylalanine 60, arginine 88, threonine 94, arginine 105, and asparagine 115. Histidine 118 (pros-phosphohistidine intermediate) is an active-site residue.

Belongs to the NDK family. In terms of assembly, hexamer of two different chains: An and B (A6, A5B, A4B2, A3B3, A2B4, AB5, B6). Interacts with CAPN8. Interacts with AKAP13. Interacts with ITGB1BP1 (via C-terminal domain region). Interacts with BCL2L10. Mg(2+) serves as cofactor.

Its subcellular location is the cytoplasm. It localises to the cell projection. The protein localises to the lamellipodium. It is found in the ruffle. The protein resides in the nucleus. It catalyses the reaction a 2'-deoxyribonucleoside 5'-diphosphate + ATP = a 2'-deoxyribonucleoside 5'-triphosphate + ADP. The catalysed reaction is a ribonucleoside 5'-diphosphate + ATP = a ribonucleoside 5'-triphosphate + ADP. It carries out the reaction ATP + protein L-histidine = ADP + protein N-phospho-L-histidine.. Its function is as follows. Major role in the synthesis of nucleoside triphosphates other than ATP. The ATP gamma phosphate is transferred to the NDP beta phosphate via a ping-pong mechanism, using a phosphorylated active-site intermediate. Negatively regulates Rho activity by interacting with AKAP13/LBC. Acts as a transcriptional activator of the MYC gene; binds DNA non-specifically. Binds to both single-stranded guanine- and cytosine-rich strands within the nuclease hypersensitive element (NHE) III(1) region of the MYC gene promoter. Does not bind to duplex NHE III(1). Has G-quadruplex (G4) DNA-binding activity, which is independent of its nucleotide-binding and kinase activity. Binds both folded and unfolded G4 with similar low nanomolar affinities. Stabilizes folded G4s regardless of whether they are prefolded or not. Exhibits histidine protein kinase activity. The sequence is that of Nucleoside diphosphate kinase B (NME2) from Bos taurus (Bovine).